Consider the following 223-residue polypeptide: Ribose-5-phosphate isomerase A (223 aa).

Residues 29–32 (TGST), 82–85 (DGAD), and 95–98 (KGGG) each bind substrate. The Proton acceptor role is filled by Glu-104. Residue Lys-122 participates in substrate binding.

This sequence belongs to the ribose 5-phosphate isomerase family. In terms of assembly, homodimer.

It carries out the reaction aldehydo-D-ribose 5-phosphate = D-ribulose 5-phosphate. It participates in carbohydrate degradation; pentose phosphate pathway; D-ribose 5-phosphate from D-ribulose 5-phosphate (non-oxidative stage): step 1/1. Functionally, catalyzes the reversible conversion of ribose-5-phosphate to ribulose 5-phosphate. The protein is Ribose-5-phosphate isomerase A of Neisseria meningitidis serogroup C / serotype 2a (strain ATCC 700532 / DSM 15464 / FAM18).